The sequence spans 150 residues: 16 kDa phloem protein 1 (150 aa).

The region spanning 1 to 108 (MGMGMMEVHL…LAEGVRKGKS (108 aa)) is the C2 domain. Ca(2+)-binding residues include Asp-20, Asp-27, Asp-78, Asp-80, and Asp-86.

Requires Ca(2+) as cofactor. As to expression, sieve elements of leaves, stems, roots and flowers.

Binds to both sense and antisense RNA. Interacts with mesophyll plasmodesmata to mediate its own cell-to-cell transport and potentiate RNA trafficking. This chain is 16 kDa phloem protein 1 (PP16-1), found in Cucurbita maxima (Pumpkin).